Reading from the N-terminus, the 129-residue chain is Follitropin subunit beta (129 aa).

An N-terminal signal peptide occupies residues 1–20 (MKSVQLCFLFCCWRAICCKS). 6 disulfide bridges follow: C21–C69, C35–C84, C38–C122, C46–C100, C50–C102, and C105–C112. Residues N25 and N42 are each glycosylated (N-linked (GlcNAc...) asparagine).

This sequence belongs to the glycoprotein hormones subunit beta family. As to quaternary structure, heterodimer. The active follitropin is a heterodimer composed of an alpha chain/CGA shared with other hormones and a unique beta chain/FSHB shown here.

It is found in the secreted. Together with the alpha chain CGA constitutes follitropin, the follicle-stimulating hormone, and provides its biological specificity to the hormone heterodimer. Binds FSHR, a G protein-coupled receptor, on target cells to activate downstream signaling pathways. Follitropin is involved in follicle development and spermatogenesis in reproductive organs. This is Follitropin subunit beta (FSHB) from Ailuropoda melanoleuca (Giant panda).